Reading from the N-terminus, the 86-residue chain is Progonadoliberin IIB (86 aa).

The N-terminal stretch at 1-24 is a signal peptide; the sequence is MVHICRLFVVMGMLMFLSVQFASS. Residue Gln-25 is modified to Pyrrolidone carboxylic acid. Position 34 is a glycine amide (Gly-34).

This sequence belongs to the GnRH family. As to expression, olfactory bulbs, hypothalamus and telencephalon, midbrain and posterior brain areas.

The protein localises to the secreted. Stimulates the secretion of gonadotropins. This chain is Progonadoliberin IIB (gnrh2b), found in Carassius auratus (Goldfish).